The primary structure comprises 240 residues: Insulin-like growth factor-binding protein 3 receptor (240 aa).

An N-terminal signal peptide occupies residues 1–38 (MGNCQAGHNLHLCLAHHPPLVCATLILLLLGLSGLGLG). Over 39–204 (SFLLTHRTGL…SEELALCGSR (166 aa)) the chain is Extracellular. N-linked (GlcNAc...) asparagine glycans are attached at residues Asn73, Asn101, and Asn167. A helical membrane pass occupies residues 205 to 225 (LLVLGSFLLLFCGLLCCVTAM). The Cytoplasmic portion of the chain corresponds to 226–240 (CFHPRRESHWSRTRL).

In terms of assembly, interacts with IGFBP3. Interacts with CASP8. As to expression, widely expressed in normal tissues but suppressed in prostate and breast tumor.

Its subcellular location is the cell membrane. In terms of biological role, cell death receptor specific for IGFBP3, may mediate caspase-8-dependent apoptosis upon ligand binding. This is Insulin-like growth factor-binding protein 3 receptor (TMEM219) from Homo sapiens (Human).